A 400-amino-acid chain; its full sequence is MSSKLVLVLNCGSSSLKFAIIDPANGDEYLSGLAECFHLPEARIKWKLDGAKQEAALGAGAAHSEALNFMVKTILAQKPELSAQIAAIGHRIVHGGEKLTHSVVIDESVIQGIKDASSFAPLHNPAHLIGIDEALKNFPHLSDKNVAVFDTAFHQTMPEESYLYALPYKLYKEHGVRRYGAHGTSHYYVTQEAAKALNKPVSELNIITCHLGNGGSVAAIRHGECVDTSMGLTPLEGLVMGTRSGDLDPAIIFFLHDTLGMNVGAINNMLTKESGLLGLTEVTSDCRYVEDNYDSKADAKRAMDVYCHRLAKYIGSYSAQMDGRLDAVIFTGGIGENSSMVRELTLNKLALLGIEVDAERNLAARFGKSGFINKEGTRPVLVLPTNEELVIAQDASRLTA.

Asn10 provides a ligand contact to Mg(2+). Lys17 contacts ATP. Arg91 contacts substrate. Residue Asp150 is the Proton donor/acceptor of the active site. ATP contacts are provided by residues 210–214, 285–287, and 333–337; these read HLGNG, DCR, and GIGEN. Residue Glu387 coordinates Mg(2+).

The protein belongs to the acetokinase family. As to quaternary structure, homodimer. The cofactor is Mg(2+). Mn(2+) serves as cofactor.

Its subcellular location is the cytoplasm. The catalysed reaction is acetate + ATP = acetyl phosphate + ADP. It participates in metabolic intermediate biosynthesis; acetyl-CoA biosynthesis; acetyl-CoA from acetate: step 1/2. Its function is as follows. Catalyzes the formation of acetyl phosphate from acetate and ATP. Can also catalyze the reverse reaction. In Erwinia tasmaniensis (strain DSM 17950 / CFBP 7177 / CIP 109463 / NCPPB 4357 / Et1/99), this protein is Acetate kinase.